An 877-amino-acid chain; its full sequence is Clumping factor B (877 aa).

Residues 1–44 (MKKRIDYLSNKQNKYSIRRFTVGTTSVIVGATILFGIGNHQAQA) form the signal peptide. Positions 15 to 26 (YSIRRFTVGTTS) match the YSIRK-G/S signaling motif motif. Polar residues-rich tracts occupy residues 44-61 (ASEQSNDTTQSSKNNASA) and 68-95 (MIETPQLNTTANDTSDISANTNSANVDS). Positions 44-192 (ASEQSNDTTQ…QGTSKPSVRT (149 aa)) are disordered. A ligand binding A region region spans residues 45–542 (SEQSNDTTQS…GSADGDSAVN (498 aa)). A compositionally biased stretch (low complexity) spans 96 to 119 (TTKPMSTQTSNTTTTEPASTNETP). Residues 120–189 (QPTAIKNQAT…SNAQGTSKPS (70 aa)) show a composition bias toward polar residues. An MIDAS-like motif motif is present at residues 272–276 (DYSNS). The segment at 530–849 (YGGGSADGDS…ETGDKSENTN (320 aa)) is disordered. A compositionally biased stretch (pro residues) spans 545 to 555 (DPTPGPPVDPE). Acidic residues predominate over residues 556–801 (PSPDPEPEPT…SDSDSDSDSD (246 aa)). The span at 805–816 (RVTPPNNEQKAP) shows a compositional bias: polar residues. A compositionally biased stretch (basic and acidic residues) spans 833–846 (HKTDALPETGDKSE). Residues 838–842 (LPETG) carry the LPXTG sorting signal motif. Thr841 carries the pentaglycyl murein peptidoglycan amidated threonine modification. A propeptide spans 842–877 (GDKSENTNATLFGAMMALLGSLLLFRKRKQDHKEKA) (removed by sortase).

This sequence belongs to the serine-aspartate repeat-containing protein (SDr) family. In terms of processing, proteolytically cleaved by aureolysin (aur). This cleavage leads to the inactivation of ClfB.

It is found in the secreted. It localises to the cell wall. Functionally, cell surface-associated protein implicated in virulence by promoting bacterial attachment to both alpha- and beta-chains of human fibrinogen and inducing the formation of bacterial clumps. The sequence is that of Clumping factor B (clfB) from Staphylococcus aureus (strain Mu50 / ATCC 700699).